Consider the following 81-residue polypeptide: Sulfur carrier protein TusA (81 aa).

The active-site Cysteine persulfide intermediate is cysteine 19.

The protein belongs to the sulfur carrier protein TusA family. Interacts with IscS.

It localises to the cytoplasm. It functions in the pathway tRNA modification. Its function is as follows. Sulfur carrier protein involved in sulfur trafficking in the cell. Part of a sulfur-relay system required for 2-thiolation during synthesis of 2-thiouridine of the modified wobble base 5-methylaminomethyl-2-thiouridine (mnm(5)s(2)U) in tRNA. Interacts with IscS and stimulates its cysteine desulfurase activity. Accepts an activated sulfur from IscS, which is then transferred to TusD, and thus determines the direction of sulfur flow from IscS to 2-thiouridine formation. Also appears to be involved in sulfur transfer for the biosynthesis of molybdopterin. The chain is Sulfur carrier protein TusA from Serratia proteamaculans (strain 568).